The sequence spans 596 residues: NADH-quinone oxidoreductase subunit C/D (596 aa).

The NADH dehydrogenase I subunit C stretch occupies residues 1–186 (MTDLTAQDAA…DPFELTKAKQ (186 aa)). An NADH dehydrogenase I subunit D region spans residues 210–596 (DFMFLNLGPN…IDFVMSDVDR (387 aa)).

The protein in the N-terminal section; belongs to the complex I 30 kDa subunit family. This sequence in the C-terminal section; belongs to the complex I 49 kDa subunit family. In terms of assembly, NDH-1 is composed of 13 different subunits. Subunits NuoB, CD, E, F, and G constitute the peripheral sector of the complex.

It localises to the cell inner membrane. The enzyme catalyses a quinone + NADH + 5 H(+)(in) = a quinol + NAD(+) + 4 H(+)(out). NDH-1 shuttles electrons from NADH, via FMN and iron-sulfur (Fe-S) centers, to quinones in the respiratory chain. The immediate electron acceptor for the enzyme in this species is believed to be ubiquinone. Couples the redox reaction to proton translocation (for every two electrons transferred, four hydrogen ions are translocated across the cytoplasmic membrane), and thus conserves the redox energy in a proton gradient. This Salmonella choleraesuis (strain SC-B67) protein is NADH-quinone oxidoreductase subunit C/D.